A 346-amino-acid chain; its full sequence is Leucine zipper protein 2 (346 aa).

The signal sequence occupies residues 1–19 (MKFSPAHYLLPLLPALVLS). Residues 16 to 211 (LVLSTRQDYE…QMKAMKETVQ (196 aa)) adopt a coiled-coil conformation. N-linked (GlcNAc...) asparagine glycosylation is present at asparagine 133. The leucine-zipper stretch occupies residues 164–192 (LRYGKKDLLFKAQQLTDLEQKLAVAKNEL). The tract at residues 225-346 (ALSLITSNPT…GMAAREEKIL (122 aa)) is disordered. The span at 250-261 (AAAKSKPQQSAS) shows a compositional bias: low complexity. A compositionally biased stretch (polar residues) spans 262 to 283 (GNNESSQVESTKEGSPSTTACD). An N-linked (GlcNAc...) asparagine glycan is attached at asparagine 264. The segment covering 286–298 (DEGRTCSIKHKES) has biased composition (basic and acidic residues). Asparagine 302 carries an N-linked (GlcNAc...) asparagine glycan.

The protein resides in the secreted. The sequence is that of Leucine zipper protein 2 (LUZP2) from Pongo abelii (Sumatran orangutan).